Consider the following 871-residue polypeptide: Translation initiation factor IF-2 (871 aa).

2 disordered regions span residues 60-101 and 184-203; these read KKNI…QEVK and ESLK…KKES. Residues 61 to 72 show a composition bias toward basic residues; the sequence is KNIKTPTAKKPK. The segment covering 73–101 has biased composition (basic and acidic residues); that stretch reads KENIKEQEKLNESEKKEPKKEEKLKQEVK. The tr-type G domain maps to 370 to 537; it reads TRAPVITIMG…IVLLQADILE (168 aa). Residues 379–386 are G1; that stretch reads GHVDHGKT. 379 to 386 lines the GTP pocket; it reads GHVDHGKT. The tract at residues 404–408 is G2; the sequence is GITQH. Positions 425 to 428 are G3; it reads DTPG. GTP-binding positions include 425 to 429 and 479 to 482; these read DTPGH and NKMD. A G4 region spans residues 479–482; the sequence is NKMD. The tract at residues 515 to 517 is G5; it reads SAK.

Belongs to the TRAFAC class translation factor GTPase superfamily. Classic translation factor GTPase family. IF-2 subfamily.

It localises to the cytoplasm. One of the essential components for the initiation of protein synthesis. Protects formylmethionyl-tRNA from spontaneous hydrolysis and promotes its binding to the 30S ribosomal subunits. Also involved in the hydrolysis of GTP during the formation of the 70S ribosomal complex. This is Translation initiation factor IF-2 from Campylobacter jejuni (strain RM1221).